A 268-amino-acid polypeptide reads, in one-letter code: Nickel import ATP-binding protein NikE (268 aa).

One can recognise an ABC transporter domain in the interval 4-252 (LNVSDLSHHY…SSDAGRVLQN (249 aa)). 45 to 52 (GRSGCGKS) contributes to the ATP binding site.

Belongs to the ABC transporter superfamily. Nickel importer (TC 3.A.1.5.3) family. In terms of assembly, the complex is composed of two ATP-binding proteins (NikD and NikE), two transmembrane proteins (NikB and NikC) and a solute-binding protein (NikA).

Its subcellular location is the cell inner membrane. The catalysed reaction is Ni(2+)(out) + ATP + H2O = Ni(2+)(in) + ADP + phosphate + H(+). Its function is as follows. Part of the ABC transporter complex NikABCDE involved in nickel import. Responsible for energy coupling to the transport system. This chain is Nickel import ATP-binding protein NikE, found in Shigella dysenteriae serotype 1 (strain Sd197).